We begin with the raw amino-acid sequence, 421 residues long: Serine--tRNA ligase (421 aa).

Thr-232 to Glu-234 contributes to the L-serine binding site. An ATP-binding site is contributed by Arg-262–Glu-264. Glu-285 is an L-serine binding site. ATP is bound at residue Glu-349–Ser-352. Residue Ser-384 participates in L-serine binding.

The protein belongs to the class-II aminoacyl-tRNA synthetase family. Type-1 seryl-tRNA synthetase subfamily. As to quaternary structure, homodimer. The tRNA molecule binds across the dimer.

It is found in the cytoplasm. It catalyses the reaction tRNA(Ser) + L-serine + ATP = L-seryl-tRNA(Ser) + AMP + diphosphate + H(+). The catalysed reaction is tRNA(Sec) + L-serine + ATP = L-seryl-tRNA(Sec) + AMP + diphosphate + H(+). It participates in aminoacyl-tRNA biosynthesis; selenocysteinyl-tRNA(Sec) biosynthesis; L-seryl-tRNA(Sec) from L-serine and tRNA(Sec): step 1/1. Catalyzes the attachment of serine to tRNA(Ser). Is also able to aminoacylate tRNA(Sec) with serine, to form the misacylated tRNA L-seryl-tRNA(Sec), which will be further converted into selenocysteinyl-tRNA(Sec). This Mycoplasma mobile (strain ATCC 43663 / 163K / NCTC 11711) (Mesomycoplasma mobile) protein is Serine--tRNA ligase.